The following is a 254-amino-acid chain: 5-oxoprolinase subunit A (254 aa).

Belongs to the LamB/PxpA family. In terms of assembly, forms a complex composed of PxpA, PxpB and PxpC.

It catalyses the reaction 5-oxo-L-proline + ATP + 2 H2O = L-glutamate + ADP + phosphate + H(+). Catalyzes the cleavage of 5-oxoproline to form L-glutamate coupled to the hydrolysis of ATP to ADP and inorganic phosphate. In Burkholderia mallei (strain NCTC 10247), this protein is 5-oxoprolinase subunit A.